Consider the following 454-residue polypeptide: Bifunctional protein GlmU (454 aa).

The pyrophosphorylase stretch occupies residues 1 to 226 (MSLNVVILAA…PIETEGANNR (226 aa)). UDP-N-acetyl-alpha-D-glucosamine-binding positions include 8–11 (LAAG), lysine 22, glutamine 73, 78–79 (GT), 100–102 (YGD), glycine 137, glutamate 151, asparagine 166, and asparagine 224. Mg(2+) is bound at residue aspartate 102. Residue asparagine 224 participates in Mg(2+) binding. A linker region spans residues 227–247 (VQLAALERAYQARRAEELMLA). Residues 248-454 (GANLRDPARI…GWQRPVKKPK (207 aa)) form an N-acetyltransferase region. Residues arginine 330 and lysine 348 each contribute to the UDP-N-acetyl-alpha-D-glucosamine site. Histidine 360 functions as the Proton acceptor in the catalytic mechanism. Tyrosine 363 and asparagine 374 together coordinate UDP-N-acetyl-alpha-D-glucosamine. Acetyl-CoA-binding positions include alanine 377, 383-384 (NY), serine 402, alanine 420, and arginine 437.

In the N-terminal section; belongs to the N-acetylglucosamine-1-phosphate uridyltransferase family. It in the C-terminal section; belongs to the transferase hexapeptide repeat family. In terms of assembly, homotrimer. Mg(2+) is required as a cofactor.

It localises to the cytoplasm. It carries out the reaction alpha-D-glucosamine 1-phosphate + acetyl-CoA = N-acetyl-alpha-D-glucosamine 1-phosphate + CoA + H(+). The enzyme catalyses N-acetyl-alpha-D-glucosamine 1-phosphate + UTP + H(+) = UDP-N-acetyl-alpha-D-glucosamine + diphosphate. It participates in nucleotide-sugar biosynthesis; UDP-N-acetyl-alpha-D-glucosamine biosynthesis; N-acetyl-alpha-D-glucosamine 1-phosphate from alpha-D-glucosamine 6-phosphate (route II): step 2/2. It functions in the pathway nucleotide-sugar biosynthesis; UDP-N-acetyl-alpha-D-glucosamine biosynthesis; UDP-N-acetyl-alpha-D-glucosamine from N-acetyl-alpha-D-glucosamine 1-phosphate: step 1/1. The protein operates within bacterial outer membrane biogenesis; LPS lipid A biosynthesis. In terms of biological role, catalyzes the last two sequential reactions in the de novo biosynthetic pathway for UDP-N-acetylglucosamine (UDP-GlcNAc). The C-terminal domain catalyzes the transfer of acetyl group from acetyl coenzyme A to glucosamine-1-phosphate (GlcN-1-P) to produce N-acetylglucosamine-1-phosphate (GlcNAc-1-P), which is converted into UDP-GlcNAc by the transfer of uridine 5-monophosphate (from uridine 5-triphosphate), a reaction catalyzed by the N-terminal domain. This chain is Bifunctional protein GlmU, found in Shewanella amazonensis (strain ATCC BAA-1098 / SB2B).